Here is a 550-residue protein sequence, read N- to C-terminus: Hydroxylamine reductase (550 aa).

[2Fe-2S] cluster is bound by residues C3, C6, C18, and C25. Hybrid [4Fe-2O-2S] cluster contacts are provided by H249, E273, C317, C405, C433, C458, E492, and K494. Residue C405 is modified to Cysteine persulfide.

The protein belongs to the HCP family. The cofactor is [2Fe-2S] cluster. It depends on hybrid [4Fe-2O-2S] cluster as a cofactor.

The protein resides in the cytoplasm. It catalyses the reaction A + NH4(+) + H2O = hydroxylamine + AH2 + H(+). Functionally, catalyzes the reduction of hydroxylamine to form NH(3) and H(2)O. This is Hydroxylamine reductase from Pectobacterium carotovorum subsp. carotovorum (strain PC1).